A 322-amino-acid polypeptide reads, in one-letter code: MRPPRTTELDRPMTTAASQRPRVPRRLLDGVLLLDKPVGLSSNDALIRAKRLLLAKKAGHTGTLDPLASGLLPLCFGEATKFSQDLLEADKTYEATMRLGQRTATGDAEGEVIDTRPVECDRAAVEAALVRFTGEIVQVPPMYSALKRDGKPLYEYARAGQTVEREGRNVTILALALLACDLPDVTFRVTCSKGTYVRTLAEDIGEALGCGAHLTMLRRTGVGALTLEHAVTLDALSDADDASRDAWLQPVDALLSTFPLVRLDETSAKRFLHGQRLPLSALDPIDAAEGERVRVYDATRLLGVARKANGVLAPERLVVTAA.

Residues 1–11 (MRPPRTTELDR) show a composition bias toward basic and acidic residues. Residues 1-22 (MRPPRTTELDRPMTTAASQRPR) form a disordered region. The Nucleophile role is filled by aspartate 65.

This sequence belongs to the pseudouridine synthase TruB family. Type 1 subfamily.

It carries out the reaction uridine(55) in tRNA = pseudouridine(55) in tRNA. Its function is as follows. Responsible for synthesis of pseudouridine from uracil-55 in the psi GC loop of transfer RNAs. The polypeptide is tRNA pseudouridine synthase B (Burkholderia lata (strain ATCC 17760 / DSM 23089 / LMG 22485 / NCIMB 9086 / R18194 / 383)).